The following is a 75-amino-acid chain: Penaeidin-3k (75 aa).

The signal sequence occupies residues 1-19; that stretch reads MRLVVCLVFLASFALVCQG. A Pyrrolidone carboxylic acid modification is found at Gln-20. 3 cysteine pairs are disulfide-bonded: Cys-44–Cys-59, Cys-48–Cys-66, and Cys-60–Cys-67. Ser-74 bears the Serine amide mark.

Belongs to the penaeidin family.

It localises to the cytoplasmic granule. In terms of biological role, antibacterial and antifungal activity. Presents chitin-binding activity. In Penaeus setiferus (Atlantic white shrimp), this protein is Penaeidin-3k.